Reading from the N-terminus, the 154-residue chain is 6,7-dimethyl-8-ribityllumazine synthase (154 aa).

5-amino-6-(D-ribitylamino)uracil-binding positions include Phe-22, 56-58 (AFE), and 80-82 (AVI). 85 to 86 (AT) lines the (2S)-2-hydroxy-3-oxobutyl phosphate pocket. The active-site Proton donor is the His-88. Phe-113 lines the 5-amino-6-(D-ribitylamino)uracil pocket. Residue Arg-127 coordinates (2S)-2-hydroxy-3-oxobutyl phosphate.

It belongs to the DMRL synthase family. In terms of assembly, forms an icosahedral capsid composed of 60 subunits, arranged as a dodecamer of pentamers.

It catalyses the reaction (2S)-2-hydroxy-3-oxobutyl phosphate + 5-amino-6-(D-ribitylamino)uracil = 6,7-dimethyl-8-(1-D-ribityl)lumazine + phosphate + 2 H2O + H(+). Its pathway is cofactor biosynthesis; riboflavin biosynthesis; riboflavin from 2-hydroxy-3-oxobutyl phosphate and 5-amino-6-(D-ribitylamino)uracil: step 1/2. Its function is as follows. Catalyzes the formation of 6,7-dimethyl-8-ribityllumazine by condensation of 5-amino-6-(D-ribitylamino)uracil with 3,4-dihydroxy-2-butanone 4-phosphate. This is the penultimate step in the biosynthesis of riboflavin. This chain is 6,7-dimethyl-8-ribityllumazine synthase, found in Anoxybacillus flavithermus (strain DSM 21510 / WK1).